The following is a 527-amino-acid chain: Peptide chain release factor 3 (527 aa).

The tr-type G domain maps to 11–278 (AKRRTFAIIS…GFVEWAPPPL (268 aa)). GTP-binding positions include 20–27 (SHPDAGKT), 87–91 (DTPGH), and 141–144 (NKMD).

The protein belongs to the TRAFAC class translation factor GTPase superfamily. Classic translation factor GTPase family. PrfC subfamily.

The protein localises to the cytoplasm. In terms of biological role, increases the formation of ribosomal termination complexes and stimulates activities of RF-1 and RF-2. It binds guanine nucleotides and has strong preference for UGA stop codons. It may interact directly with the ribosome. The stimulation of RF-1 and RF-2 is significantly reduced by GTP and GDP, but not by GMP. This chain is Peptide chain release factor 3, found in Saccharophagus degradans (strain 2-40 / ATCC 43961 / DSM 17024).